The chain runs to 794 residues: Cadherin-12 (794 aa).

Residues 1-23 (MLTRNCLSLLLWVLFDGGLLTPL) form the signal peptide. A propeptide spanning residues 24–54 (QPQPQQTLATEPRENVIHLPGQRSHFQRVKR) is cleaved from the precursor. Cadherin domains are found at residues 55 to 160 (GWVW…EPKF), 161 to 269 (LDGP…PPRF), 270 to 384 (PKSI…PPVF), 385 to 487 (SKPL…EFPP), and 488 to 609 (EISV…IFLP). At 55–609 (GWVWNQFFVL…SCNVEAIFLP (555 aa)) the chain is on the extracellular side. Residue Asn-256 is glycosylated (N-linked (GlcNAc...) asparagine). N-linked (GlcNAc...) asparagine glycans are attached at residues Asn-456, Asn-537, and Asn-545. Residues 610–637 (VGLSTGALIAILLCIVILLAIVVLYVAL) form a helical membrane-spanning segment. The Cytoplasmic portion of the chain corresponds to 638–794 (RRQKKKDTLM…EESYNPDKVT (157 aa)). A Phosphoserine modification is found at Ser-787.

As to expression, brain.

It localises to the cell membrane. In terms of biological role, cadherins are calcium-dependent cell adhesion proteins. They preferentially interact with themselves in a homophilic manner in connecting cells; cadherins may thus contribute to the sorting of heterogeneous cell types. The sequence is that of Cadherin-12 (CDH12) from Homo sapiens (Human).